The following is a 546-amino-acid chain: MVVILDKRCYCNLLILILMISECSVGILHYEKLSKIGLVKGVTRKYKIKSNPLTKDIVIKMIPNVSNMSQCTGSVMENYKTRLNGILTPIKGALEIYKNNTHDLVGDVRLAGVIMAGVAIGIATAAQITAGVALYEAMKNADNINKLKSSIESTNEAVVKLQETAEKTVYVLTALQDYINTNLVPTIDKISCKQTELSLDLALSKYLSDLLFVFGPNLQDPVSNSMTIQAISQAFGGNYETLLRTLGYATEDFDDLLESDSITGQIIYVDLSSYYIIVRVYFPILTEIQQAYIQELLPVSFNNDNSEWISIVPNFILVRNTLISNIEIGFCLITKRSVICNQDYATPMTNNMRECLTGSTEKCPRELVVSSHVPRFALSNGVLFANCISVTCQCQTTGRAISQSGEQTLLMIDNTTCPTAVLGNVIISLGKYLGSVNYNSEGIAIGPPVFTDKVDISSQISSMNQSLQQSKDYIKEAQRLLDTVNPSLISMLSMIILYVLSIASLCIGLITFISFIIVEKKRNTYSRLEDRRVRPTSSGDLYYIGT.

An N-terminal signal peptide occupies residues 1 to 26 (MVVILDKRCYCNLLILILMISECSVG). Over 27-497 (ILHYEKLSKI…LISMLSMIIL (471 aa)) the chain is Extracellular. N-linked (GlcNAc...) asparagine; by host glycans are attached at residues asparagine 64, asparagine 67, and asparagine 99. Disulfide bonds link cysteine 71-cysteine 192, cysteine 331-cysteine 340, cysteine 355-cysteine 363, cysteine 387-cysteine 392, and cysteine 394-cysteine 417. The fusion peptide stretch occupies residues 110-134 (LAGVIMAGVAIGIATAAQITAGVAL). The stretch at 135-163 (YEAMKNADNINKLKSSIESTNEAVVKLQE) forms a coiled coil. N-linked (GlcNAc...) asparagine; by host glycosylation is found at asparagine 414 and asparagine 464. Positions 459–484 (QISSMNQSLQQSKDYIKEAQRLLDTV) form a coiled coil. The chain crosses the membrane as a helical span at residues 498–518 (YVLSIASLCIGLITFISFIIV). The Cytoplasmic segment spans residues 519–546 (EKKRNTYSRLEDRRVRPTSSGDLYYIGT).

Belongs to the paramyxoviruses fusion glycoprotein family. As to quaternary structure, homotrimer; disulfide-linked F1-F2. Interacts with the Glycoprotein G; this interaction involves both head and stalk regions of glygoprotein G. In pre-fusion state, found as a dimer of trimer. Post-translationally, the inactive precursor F0 is glycosylated and proteolytically cleaved into F1 and F2 to be functionally active. The cleavage is mediated by cellular proteases during the transport and maturation of the polypeptide.

The protein localises to the virion membrane. The protein resides in the host cell membrane. Class I viral fusion protein. Under the current model, the protein has at least 3 conformational states: pre-fusion native state, pre-hairpin intermediate state, and post-fusion hairpin state. During viral and plasma cell membrane fusion, the heptad repeat (HR) regions assume a trimer-of-hairpins structure, positioning the fusion peptide in close proximity to the C-terminal region of the ectodomain. The formation of this structure appears to drive apposition and subsequent fusion of viral and plasma cell membranes. Directs fusion of viral and cellular membranes leading to delivery of the nucleocapsid into the cytoplasm. This fusion is pH independent and occurs directly at the outer cell membrane. The trimer of F1-F2 (F protein) probably interacts with G at the virion surface. Upon G binding to its cellular receptor, the hydrophobic fusion peptide is unmasked and interacts with the cellular membrane, inducing the fusion between cell and virion membranes. Later in infection, F proteins expressed at the plasma membrane of infected cells could mediate fusion with adjacent cells to form syncytia, a cytopathic effect that could lead to tissue necrosis. This chain is Fusion glycoprotein F0 (F), found in Cynopterus brachyotis (Lesser short-nosed fruit bat).